Reading from the N-terminus, the 78-residue chain is Large ribosomal subunit protein bL28 (78 aa).

The segment at 1–20 (MSRVCQVTGKGPVTGNNISH) is disordered.

This sequence belongs to the bacterial ribosomal protein bL28 family.

This is Large ribosomal subunit protein bL28 from Azotobacter vinelandii (strain DJ / ATCC BAA-1303).